A 429-amino-acid chain; its full sequence is Histidinol dehydrogenase (429 aa).

Residues Tyr-127, Gln-188, and Asn-211 each contribute to the NAD(+) site. Positions 234, 256, and 259 each coordinate substrate. The Zn(2+) site is built by Gln-256 and His-259. Active-site proton acceptor residues include Glu-324 and His-325. Substrate-binding residues include His-325, Asp-358, Glu-412, and His-417. Asp-358 provides a ligand contact to Zn(2+). A Zn(2+)-binding site is contributed by His-417.

The protein belongs to the histidinol dehydrogenase family. The cofactor is Zn(2+).

It catalyses the reaction L-histidinol + 2 NAD(+) + H2O = L-histidine + 2 NADH + 3 H(+). Its pathway is amino-acid biosynthesis; L-histidine biosynthesis; L-histidine from 5-phospho-alpha-D-ribose 1-diphosphate: step 9/9. In terms of biological role, catalyzes the sequential NAD-dependent oxidations of L-histidinol to L-histidinaldehyde and then to L-histidine. This chain is Histidinol dehydrogenase, found in Bacillus thuringiensis subsp. konkukian (strain 97-27).